The following is a 186-amino-acid chain: UPF0200 protein PF1294 (186 aa).

ATP is bound at residue G7–G14.

The protein belongs to the UPF0200 family.

This is UPF0200 protein PF1294 from Pyrococcus furiosus (strain ATCC 43587 / DSM 3638 / JCM 8422 / Vc1).